Here is a 303-residue protein sequence, read N- to C-terminus: uncharacterized protein (303 aa).

Residues 183–281 (KDILFYLNNN…GCSPSDYRRQ (99 aa)) form the HTH araC/xylS-type domain. 2 DNA-binding regions (H-T-H motif) span residues 200-221 (EQLS…TKEY) and 248-271 (QAEI…LRHV).

This is an uncharacterized protein from Escherichia coli (strain K12).